A 342-amino-acid chain; its full sequence is Succinylglutamate desuccinylase (342 aa).

Zn(2+)-binding residues include H64, E67, and H159. E222 is a catalytic residue.

Belongs to the AspA/AstE family. Succinylglutamate desuccinylase subfamily. The cofactor is Zn(2+).

The catalysed reaction is N-succinyl-L-glutamate + H2O = L-glutamate + succinate. Its pathway is amino-acid degradation; L-arginine degradation via AST pathway; L-glutamate and succinate from L-arginine: step 5/5. Its function is as follows. Transforms N(2)-succinylglutamate into succinate and glutamate. This is Succinylglutamate desuccinylase from Burkholderia orbicola (strain AU 1054).